Here is a 73-residue protein sequence, read N- to C-terminus: Large ribosomal subunit protein bL31 (73 aa).

The protein belongs to the bacterial ribosomal protein bL31 family. Type A subfamily. In terms of assembly, part of the 50S ribosomal subunit.

Its function is as follows. Binds the 23S rRNA. The chain is Large ribosomal subunit protein bL31 (rpmE) from Roseobacter denitrificans (strain ATCC 33942 / OCh 114) (Erythrobacter sp. (strain OCh 114)).